We begin with the raw amino-acid sequence, 138 residues long: Transcriptional activator protein (138 aa).

Over residues 1–20 (MTGSKKTPSTSPSKKLSSPP) the composition is skewed to low complexity. The disordered stretch occupies residues 1 to 23 (MTGSKKTPSTSPSKKLSSPPEVK). The Nuclear localization signal motif lies at 23-37 (KLRHRFAKRQIRRRR). Residues 42–59 (CGCSIYIHINCVNNGFTH) fold into a zinc finger. The segment covering 85-106 (NTASGDANVHTQPGISHSSQSK) has biased composition (polar residues). The segment at 85–123 (NTASGDANVHTQPGISHSSQSKPQHEDSVGSPQSLLQLP) is disordered. Positions 113 to 123 (VGSPQSLLQLP) are enriched in low complexity. The interval 124–138 (SLDDVDDDFWADLLK) is transactivation.

Belongs to the geminiviridae transcriptional activator protein family. In terms of assembly, monomer. Homodimer. Homooligomer. Self-interaction correlates with nuclear localization and efficient activation of transcription. Monomers suppress local silencing by interacting with and inactivating host adenosine kinase 2 (ADK2) in the cytoplasm. Interacts with and inhibits host SNF1 kinase. Binds to ssDNA. Post-translationally, phosphorylated.

It is found in the host nucleus. Its subcellular location is the host cytoplasm. Functionally, strong activator of the late viral genes promoters. Enhances the expression of the capsid protein and nuclear shuttle protein. Acts as a suppressor of RNA-mediated gene silencing, also known as post-transcriptional gene silencing (PTGS), a mechanism of plant viral defense that limits the accumulation of viral RNAs. Suppresses the host RNA silencing by inhibiting adenosine kinase 2 (ADK2), a kinase involved in a general methylation pathway. Also suppresses the host basal defense by interacting with and inhibiting SNF1 kinase, a key regulator of cell metabolism implicated in innate antiviral defense. Determines pathogenicity. The polypeptide is Transcriptional activator protein (Pepper huasteco yellow vein virus (PHYVV)).